Consider the following 78-residue polypeptide: Sec-independent protein translocase protein TatA (78 aa).

Residues 1–21 (MFGRIGLPEILLILAIALIIF) form a helical membrane-spanning segment. Residues 50 to 78 (EVNEVEEEVKENKSSDVKENEDNKTEKST) form a disordered region. The segment covering 59-78 (KENKSSDVKENEDNKTEKST) has biased composition (basic and acidic residues).

The protein belongs to the TatA/E family. As to quaternary structure, forms a complex with TatC.

It is found in the cell membrane. Part of the twin-arginine translocation (Tat) system that transports large folded proteins containing a characteristic twin-arginine motif in their signal peptide across membranes. TatA could form the protein-conducting channel of the Tat system. The chain is Sec-independent protein translocase protein TatA from Natranaerobius thermophilus (strain ATCC BAA-1301 / DSM 18059 / JW/NM-WN-LF).